The sequence spans 65 residues: Alpha-conotoxin Mr1.1 (65 aa).

An N-terminal signal peptide occupies residues Met1–Ser21. The propeptide occupies Phe22–Lys48. Cystine bridges form between Cys50–Cys56 and Cys51–Cys64. Residues Ser52–Pro54 are ser-Xaa-Pro motif, crucial for potent interaction with nAChR. A Cysteine amide modification is found at Cys64.

Belongs to the conotoxin A superfamily. Expressed by the venom duct.

It localises to the secreted. Functionally, alpha-conotoxins act on postsynaptic membranes, they bind to the nicotinic acetylcholine receptors (nAChR) and thus inhibit them. This toxin potently and reversibly inhibits alpha-9-alpha-10/CHRNA9-CHRNA10 (IC(50)=92 nM (human) and IC(50)=8.3 nM (rat)) and human alpha3-beta-2/CHRNA3-CHRNB2 nAChR (IC(50)=218.9 nM). Also moderately inhibits human alpha-3-beta-4/CHRNA3-CHRNB4 (60% inhibition at 1 uM), rat alpha-7/CHRNA7 (65% inhibition at 1 uM) and rat alpha-3-beta-2/CHRNA3-CHRNB2 nAChR (50-70% inhibition at 10 uM). In two rat pain models, this toxin shows analgesic effect. The protein is Alpha-conotoxin Mr1.1 of Conus marmoreus (Marble cone).